We begin with the raw amino-acid sequence, 260 residues long: Pyridoxine 5'-phosphate synthase (260 aa).

Residue Asn-15 coordinates 3-amino-2-oxopropyl phosphate. 17 to 18 (DH) contacts 1-deoxy-D-xylulose 5-phosphate. Arg-26 lines the 3-amino-2-oxopropyl phosphate pocket. Catalysis depends on His-51, which acts as the Proton acceptor. The 1-deoxy-D-xylulose 5-phosphate site is built by Arg-53 and His-58. Glu-78 serves as the catalytic Proton acceptor. A 1-deoxy-D-xylulose 5-phosphate-binding site is contributed by Thr-108. The active-site Proton donor is the His-199. 3-amino-2-oxopropyl phosphate is bound by residues Gly-200 and 221–222 (GH).

It belongs to the PNP synthase family. As to quaternary structure, homooctamer; tetramer of dimers.

Its subcellular location is the cytoplasm. It catalyses the reaction 3-amino-2-oxopropyl phosphate + 1-deoxy-D-xylulose 5-phosphate = pyridoxine 5'-phosphate + phosphate + 2 H2O + H(+). It functions in the pathway cofactor biosynthesis; pyridoxine 5'-phosphate biosynthesis; pyridoxine 5'-phosphate from D-erythrose 4-phosphate: step 5/5. Its function is as follows. Catalyzes the complicated ring closure reaction between the two acyclic compounds 1-deoxy-D-xylulose-5-phosphate (DXP) and 3-amino-2-oxopropyl phosphate (1-amino-acetone-3-phosphate or AAP) to form pyridoxine 5'-phosphate (PNP) and inorganic phosphate. The sequence is that of Pyridoxine 5'-phosphate synthase from Cupriavidus taiwanensis (strain DSM 17343 / BCRC 17206 / CCUG 44338 / CIP 107171 / LMG 19424 / R1) (Ralstonia taiwanensis (strain LMG 19424)).